Here is a 474-residue protein sequence, read N- to C-terminus: Alanine/serine racemase (474 aa).

Pyridoxal 5'-phosphate contacts are provided by residues 139–140 (GS) and glutamine 282. Position 308 is an N6-(pyridoxal phosphate)lysine (lysine 308). Pyridoxal 5'-phosphate is bound at residue threonine 336.

The protein belongs to the class-III pyridoxal-phosphate-dependent aminotransferase family. In terms of assembly, homohexamer. Requires pyridoxal 5'-phosphate as cofactor.

It catalyses the reaction L-alanine = D-alanine. The catalysed reaction is L-serine = D-serine. Completely inhibited by hydroxylamine hydrochloride. In terms of biological role, catalyzes the interconversion of L-alanine and D-alanine, and L-serine and D-serine. Has weak activity with valine and threonine. This chain is Alanine/serine racemase, found in Pyrococcus horikoshii (strain ATCC 700860 / DSM 12428 / JCM 9974 / NBRC 100139 / OT-3).